A 91-amino-acid chain; its full sequence is DNA-binding protein HU (91 aa).

Belongs to the bacterial histone-like protein family.

Its function is as follows. Histone-like DNA-binding protein which is capable of wrapping DNA to stabilize it, and thus to prevent its denaturation under extreme environmental conditions. Also seems to act as a fortuitous virulence factor in delayed sequelae by binding to heparan sulfate-proteoglycans in the extracellular matrix of target organs and acting as a nidus for in situ immune complex formation. This is DNA-binding protein HU (hup) from Streptococcus gordonii.